The sequence spans 277 residues: Insertion element IS407 uncharacterized 31.7 kDa protein (277 aa).

The Integrase catalytic domain maps to 103–264; it reads LPGAPNEVWS…APSEFAAKHR (162 aa).

The chain is Insertion element IS407 uncharacterized 31.7 kDa protein from Burkholderia multivorans (strain ATCC 17616 / 249).